Here is a 51-residue protein sequence, read N- to C-terminus: Large ribosomal subunit protein eL39 (51 aa).

It belongs to the eukaryotic ribosomal protein eL39 family.

The polypeptide is Large ribosomal subunit protein eL39 (Hyperthermus butylicus (strain DSM 5456 / JCM 9403 / PLM1-5)).